The primary structure comprises 138 residues: Small ribosomal subunit protein uS11c (138 aa).

Positions 1–22 (MAKSIPRISSRRNGRIGSGNNV) are disordered.

It belongs to the universal ribosomal protein uS11 family. Part of the 30S ribosomal subunit.

The protein localises to the plastid. The chain is Small ribosomal subunit protein uS11c from Cuscuta reflexa (Southern Asian dodder).